Consider the following 554-residue polypeptide: Urocanate hydratase (554 aa).

NAD(+) contacts are provided by residues 50–51 (GG), glutamine 128, 174–176 (GMG), glutamate 194, arginine 199, 240–241 (NA), 261–265 (QTSAH), 271–272 (YI), and tyrosine 320. Cysteine 408 is a catalytic residue. Residue glycine 490 participates in NAD(+) binding.

This sequence belongs to the urocanase family. NAD(+) serves as cofactor.

It is found in the cytoplasm. It carries out the reaction 4-imidazolone-5-propanoate = trans-urocanate + H2O. It participates in amino-acid degradation; L-histidine degradation into L-glutamate; N-formimidoyl-L-glutamate from L-histidine: step 2/3. Its function is as follows. Catalyzes the conversion of urocanate to 4-imidazolone-5-propionate. The sequence is that of Urocanate hydratase from Rubrobacter xylanophilus (strain DSM 9941 / JCM 11954 / NBRC 16129 / PRD-1).